Here is a 489-residue protein sequence, read N- to C-terminus: CUGBP Elav-like family member 1-A (489 aa).

RRM domains lie at 16–99 (IKMF…PADS), 108–188 (RKLF…FADT), and 404–482 (ANLF…LKRS). The segment at 183–210 (VKFADTQKDKEQKRMTQQLQQQMQQLNA) is necessary for oligomerization and EDEN-dependent deadenylation.

This sequence belongs to the CELF/BRUNOL family. As to quaternary structure, oligomer. Oligomerization is required for RNA-binding and EDEN-dependent deadenylation. Post-translationally, phosphorylated during oocyte maturation and dephosphorylated following egg activation. Dephosphorylation is calcium dependent and correlates with the increase in the activity of EDEN-dependent deadenylation.

The protein resides in the nucleus. Its subcellular location is the cytoplasm. RNA-binding protein implicated in the regulation of several post-transcriptional events. May be involved in pre-mRNA alternative splicing, mRNA translation activation and stability. Mediates the rapid and sequence-specific cytoplasmic deadenylation of EDEN-containing maternal mRNAs following fertilization. Binds to AU-rich sequences (AREs) of jun mRNA. Binds to the embryonic deadenylation element (EDEN) motif localized in the 3'-UTR of maternal mRNAs. Binds to RNA containing several repeats of the consensus sequence 5'-UGU-3'. EDEN-dependent deadenylation is enhanced by the presence of an additional cis element composed of three AUU repeats. The polypeptide is CUGBP Elav-like family member 1-A (cugbp1-a) (Xenopus laevis (African clawed frog)).